Here is a 500-residue protein sequence, read N- to C-terminus: Allene oxide synthase 3 (500 aa).

The interval Met-1–Gly-26 is disordered. Substrate is bound by residues Phe-297–Asn-298, Lys-304, and Pro-365–Phe-368. Position 452 (Cys-452) interacts with heme.

Belongs to the cytochrome P450 family. Heme serves as cofactor. In terms of tissue distribution, not expressed in dark-grown seedlings.

It catalyses the reaction (13S)-hydroperoxy-(9Z,11E,15Z)-octadecatrienoate = (9Z,13S,15Z)-12,13-epoxyoctadeca-9,11,15-trienoate + H2O. The protein operates within lipid metabolism; oxylipin biosynthesis. In terms of biological role, involved in the biosynthesis of jasmonic acid, a growth regulator that is implicated also as a signaling molecule in plant defense. Converts 13-hydroperoxylinolenic acid to 12,13-epoxylinolenic acid. The sequence is that of Allene oxide synthase 3 (CYP74A3) from Oryza sativa subsp. japonica (Rice).